Reading from the N-terminus, the 254-residue chain is tRNA uridine(34) hydroxylase (254 aa).

Residues 123-217 (QDPNVILLDT…YLESIPESES (95 aa)) enclose the Rhodanese domain. Cys177 (cysteine persulfide intermediate) is an active-site residue.

Belongs to the TrhO family.

The catalysed reaction is uridine(34) in tRNA + AH2 + O2 = 5-hydroxyuridine(34) in tRNA + A + H2O. Its function is as follows. Catalyzes oxygen-dependent 5-hydroxyuridine (ho5U) modification at position 34 in tRNAs. The protein is tRNA uridine(34) hydroxylase of Legionella pneumophila (strain Paris).